A 347-amino-acid chain; its full sequence is Large ribosomal subunit protein uL3 (347 aa).

The tract at residues 325-347 (RPPKKKPPVERPQITYISRESKQ) is disordered.

Belongs to the universal ribosomal protein uL3 family. As to quaternary structure, part of the 50S ribosomal subunit. Forms a cluster with proteins L14 and L24e.

In terms of biological role, one of the primary rRNA binding proteins, it binds directly near the 3'-end of the 23S rRNA, where it nucleates assembly of the 50S subunit. The protein is Large ribosomal subunit protein uL3 of Thermococcus onnurineus (strain NA1).